A 406-amino-acid chain; its full sequence is NADH-quinone oxidoreductase subunit D (406 aa).

The protein belongs to the complex I 49 kDa subunit family. NDH-1 is composed of 14 different subunits. Subunits NuoB, C, D, E, F, and G constitute the peripheral sector of the complex.

It is found in the cell inner membrane. It catalyses the reaction a quinone + NADH + 5 H(+)(in) = a quinol + NAD(+) + 4 H(+)(out). Functionally, NDH-1 shuttles electrons from NADH, via FMN and iron-sulfur (Fe-S) centers, to quinones in the respiratory chain. The immediate electron acceptor for the enzyme in this species is believed to be ubiquinone. Couples the redox reaction to proton translocation (for every two electrons transferred, four hydrogen ions are translocated across the cytoplasmic membrane), and thus conserves the redox energy in a proton gradient. The chain is NADH-quinone oxidoreductase subunit D from Rhizorhabdus wittichii (strain DSM 6014 / CCUG 31198 / JCM 15750 / NBRC 105917 / EY 4224 / RW1) (Sphingomonas wittichii).